The sequence spans 104 residues: L-rhamnose mutarotase (104 aa).

Tyr-18 contacts substrate. Catalysis depends on His-22, which acts as the Proton donor. Substrate is bound by residues Tyr-41 and 76–77 (WW).

This sequence belongs to the rhamnose mutarotase family. Homodimer.

Its subcellular location is the cytoplasm. The enzyme catalyses alpha-L-rhamnose = beta-L-rhamnose. It functions in the pathway carbohydrate metabolism; L-rhamnose metabolism. Involved in the anomeric conversion of L-rhamnose. The sequence is that of L-rhamnose mutarotase from Salmonella arizonae (strain ATCC BAA-731 / CDC346-86 / RSK2980).